The following is a 440-amino-acid chain: L-seryl-tRNA(Sec) selenium transferase (440 aa).

K282 is modified (N6-(pyridoxal phosphate)lysine).

This sequence belongs to the SelA family. Requires pyridoxal 5'-phosphate as cofactor.

Its subcellular location is the cytoplasm. It carries out the reaction L-seryl-tRNA(Sec) + selenophosphate + H(+) = L-selenocysteinyl-tRNA(Sec) + phosphate. The protein operates within aminoacyl-tRNA biosynthesis; selenocysteinyl-tRNA(Sec) biosynthesis; selenocysteinyl-tRNA(Sec) from L-seryl-tRNA(Sec) (bacterial route): step 1/1. Converts seryl-tRNA(Sec) to selenocysteinyl-tRNA(Sec) required for selenoprotein biosynthesis. This chain is L-seryl-tRNA(Sec) selenium transferase, found in Campylobacter jejuni subsp. jejuni serotype O:6 (strain 81116 / NCTC 11828).